Consider the following 484-residue polypeptide: Glutamyl-tRNA(Gln) amidotransferase subunit A (484 aa).

Residues Lys77 and Ser152 each act as charge relay system in the active site. Ser176 (acyl-ester intermediate) is an active-site residue.

It belongs to the amidase family. GatA subfamily. In terms of assembly, heterotrimer of A, B and C subunits.

The catalysed reaction is L-glutamyl-tRNA(Gln) + L-glutamine + ATP + H2O = L-glutaminyl-tRNA(Gln) + L-glutamate + ADP + phosphate + H(+). In terms of biological role, allows the formation of correctly charged Gln-tRNA(Gln) through the transamidation of misacylated Glu-tRNA(Gln) in organisms which lack glutaminyl-tRNA synthetase. The reaction takes place in the presence of glutamine and ATP through an activated gamma-phospho-Glu-tRNA(Gln). The polypeptide is Glutamyl-tRNA(Gln) amidotransferase subunit A (Lacticaseibacillus paracasei (strain ATCC 334 / BCRC 17002 / CCUG 31169 / CIP 107868 / KCTC 3260 / NRRL B-441) (Lactobacillus paracasei)).